The primary structure comprises 388 residues: Phosphopentomutase (388 aa).

Mn(2+)-binding residues include aspartate 10, aspartate 282, histidine 287, aspartate 323, histidine 324, and histidine 335.

This sequence belongs to the phosphopentomutase family. The cofactor is Mn(2+).

It localises to the cytoplasm. The enzyme catalyses 2-deoxy-alpha-D-ribose 1-phosphate = 2-deoxy-D-ribose 5-phosphate. The catalysed reaction is alpha-D-ribose 1-phosphate = D-ribose 5-phosphate. Its pathway is carbohydrate degradation; 2-deoxy-D-ribose 1-phosphate degradation; D-glyceraldehyde 3-phosphate and acetaldehyde from 2-deoxy-alpha-D-ribose 1-phosphate: step 1/2. In terms of biological role, isomerase that catalyzes the conversion of deoxy-ribose 1-phosphate (dRib-1-P) and ribose 1-phosphate (Rib-1-P) to deoxy-ribose 5-phosphate (dRib-5-P) and ribose 5-phosphate (Rib-5-P), respectively. This chain is Phosphopentomutase, found in Desulfitobacterium hafniense (strain DSM 10664 / DCB-2).